The chain runs to 217 residues: Ribonuclease HII (217 aa).

The 190-residue stretch at 27 to 216 (SQVAGVDEAG…VKESIQEGVC (190 aa)) folds into the RNase H type-2 domain. Residues Asp-33, Glu-34, and Asp-126 each coordinate a divalent metal cation.

This sequence belongs to the RNase HII family. The cofactor is Mn(2+). Requires Mg(2+) as cofactor.

Its subcellular location is the cytoplasm. The catalysed reaction is Endonucleolytic cleavage to 5'-phosphomonoester.. In terms of biological role, endonuclease that specifically degrades the RNA of RNA-DNA hybrids. The chain is Ribonuclease HII (rnhB) from Chlamydia trachomatis serovar D (strain ATCC VR-885 / DSM 19411 / UW-3/Cx).